Consider the following 592-residue polypeptide: Syntaxin-binding protein 3 (592 aa).

A mediates interaction with DOC2B region spans residues 1–255 (MAPPVAERGL…STVLHELTFQ (255 aa)).

It belongs to the STXBP/unc-18/SEC1 family. Interacts with DOC2B; the interaction is direct, occurs at the cell membrane, excludes interaction with STX4 and regulates glucose-stimulated insulin secretion. Interacts with STX4. Post-translationally, phosphorylated by PKC in platelets in response to thrombin stimulation; phosphorylation inhibits binding to STX4. As to expression, megakaryocytes and platelets.

The protein resides in the cytoplasm. Its subcellular location is the cytosol. It localises to the cell membrane. Together with STX4 and VAMP2, may play a role in insulin-dependent movement of GLUT4 and in docking/fusion of intracellular GLUT4-containing vesicles with the cell surface in adipocytes. The polypeptide is Syntaxin-binding protein 3 (STXBP3) (Homo sapiens (Human)).